We begin with the raw amino-acid sequence, 347 residues long: ATP-dependent (S)-NAD(P)H-hydrate dehydratase (347 aa).

Residues 53–344 (TLQLVRNIIP…AEVGAAFSKL (292 aa)) form the YjeF C-terminal domain. Residue Tyr-85 is modified to Phosphotyrosine. (6S)-NADPHX contacts are provided by residues Gly-153 and 206-212 (NHVEFSR). The N-linked (GlcNAc...) asparagine glycan is linked to Asn-240. Residues 246–250 (KGERD) and 265–274 (GSSRRCGGQG) contribute to the ATP site. A (6S)-NADPHX-binding site is contributed by Asp-275. The N-linked (GlcNAc...) asparagine glycan is linked to Asn-297.

This sequence belongs to the NnrD/CARKD family. The cofactor is Mg(2+).

It localises to the mitochondrion. The enzyme catalyses (6S)-NADHX + ATP = ADP + phosphate + NADH + H(+). It catalyses the reaction (6S)-NADPHX + ATP = ADP + phosphate + NADPH + H(+). Catalyzes the dehydration of the S-form of NAD(P)HX at the expense of ATP, which is converted to ADP. Together with NAD(P)HX epimerase, which catalyzes the epimerization of the S- and R-forms, the enzyme allows the repair of both epimers of NAD(P)HX, a damaged form of NAD(P)H that is a result of enzymatic or heat-dependent hydration. The polypeptide is ATP-dependent (S)-NAD(P)H-hydrate dehydratase (Homo sapiens (Human)).